Here is an 80-residue protein sequence, read N- to C-terminus: UPF0181 protein SG1330 (80 aa).

The tract at residues 58-80 (TEVLETPAARAETDPYDSNPDDD) is disordered.

This sequence belongs to the UPF0181 family.

The chain is UPF0181 protein SG1330 from Sodalis glossinidius (strain morsitans).